A 49-amino-acid polypeptide reads, in one-letter code: Large ribosomal subunit protein bL33B (49 aa).

This sequence belongs to the bacterial ribosomal protein bL33 family.

The protein is Large ribosomal subunit protein bL33B of Exiguobacterium sibiricum (strain DSM 17290 / CCUG 55495 / CIP 109462 / JCM 13490 / 255-15).